The primary structure comprises 848 residues: Translation initiation factor IF-2 (848 aa).

Positions 1 to 20 are disordered; it reads MNESKGAVDSGLMSGKTERT. A tr-type G domain is found at 346–516; that stretch reads PRAPVVTVMG…LLMAELLELK (171 aa). The tract at residues 355–362 is G1; it reads GHVDHGKT. 355 to 362 contributes to the GTP binding site; sequence GHVDHGKT. Residues 380–384 are G2; sequence GITQH. Residues 402–405 are G3; sequence DTPG. GTP contacts are provided by residues 402-406 and 456-459; these read DTPGH and NKID. A G4 region spans residues 456–459; the sequence is NKID. Residues 492–494 are G5; sequence SAK.

This sequence belongs to the TRAFAC class translation factor GTPase superfamily. Classic translation factor GTPase family. IF-2 subfamily.

It is found in the cytoplasm. In terms of biological role, one of the essential components for the initiation of protein synthesis. Protects formylmethionyl-tRNA from spontaneous hydrolysis and promotes its binding to the 30S ribosomal subunits. Also involved in the hydrolysis of GTP during the formation of the 70S ribosomal complex. This chain is Translation initiation factor IF-2, found in Ehrlichia canis (strain Jake).